A 204-amino-acid polypeptide reads, in one-letter code: ATP phosphoribosyltransferase (204 aa).

Belongs to the ATP phosphoribosyltransferase family. Short subfamily. As to quaternary structure, heteromultimer composed of HisG and HisZ subunits.

The protein resides in the cytoplasm. The catalysed reaction is 1-(5-phospho-beta-D-ribosyl)-ATP + diphosphate = 5-phospho-alpha-D-ribose 1-diphosphate + ATP. It participates in amino-acid biosynthesis; L-histidine biosynthesis; L-histidine from 5-phospho-alpha-D-ribose 1-diphosphate: step 1/9. Its function is as follows. Catalyzes the condensation of ATP and 5-phosphoribose 1-diphosphate to form N'-(5'-phosphoribosyl)-ATP (PR-ATP). Has a crucial role in the pathway because the rate of histidine biosynthesis seems to be controlled primarily by regulation of HisG enzymatic activity. The chain is ATP phosphoribosyltransferase from Campylobacter concisus (strain 13826).